A 287-amino-acid polypeptide reads, in one-letter code: ATP synthase gamma chain (287 aa).

It belongs to the ATPase gamma chain family. F-type ATPases have 2 components, CF(1) - the catalytic core - and CF(0) - the membrane proton channel. CF(1) has five subunits: alpha(3), beta(3), gamma(1), delta(1), epsilon(1). CF(0) has three main subunits: a, b and c.

It localises to the cell inner membrane. Functionally, produces ATP from ADP in the presence of a proton gradient across the membrane. The gamma chain is believed to be important in regulating ATPase activity and the flow of protons through the CF(0) complex. This Xylella fastidiosa (strain 9a5c) protein is ATP synthase gamma chain.